The sequence spans 178 residues: ATP synthase subunit delta (178 aa).

The protein belongs to the ATPase delta chain family. In terms of assembly, F-type ATPases have 2 components, F(1) - the catalytic core - and F(0) - the membrane proton channel. F(1) has five subunits: alpha(3), beta(3), gamma(1), delta(1), epsilon(1). F(0) has three main subunits: a(1), b(2) and c(10-14). The alpha and beta chains form an alternating ring which encloses part of the gamma chain. F(1) is attached to F(0) by a central stalk formed by the gamma and epsilon chains, while a peripheral stalk is formed by the delta and b chains.

It is found in the cell membrane. In terms of biological role, f(1)F(0) ATP synthase produces ATP from ADP in the presence of a proton or sodium gradient. F-type ATPases consist of two structural domains, F(1) containing the extramembraneous catalytic core and F(0) containing the membrane proton channel, linked together by a central stalk and a peripheral stalk. During catalysis, ATP synthesis in the catalytic domain of F(1) is coupled via a rotary mechanism of the central stalk subunits to proton translocation. This protein is part of the stalk that links CF(0) to CF(1). It either transmits conformational changes from CF(0) to CF(1) or is implicated in proton conduction. In Lysinibacillus sphaericus (strain C3-41), this protein is ATP synthase subunit delta.